The chain runs to 429 residues: Probable M18 family aminopeptidase 2 (429 aa).

3 residues coordinate Zn(2+): H82, H156, and H401.

This sequence belongs to the peptidase M18 family. The cofactor is Zn(2+).

The sequence is that of Probable M18 family aminopeptidase 2 from Ectopseudomonas mendocina (strain ymp) (Pseudomonas mendocina).